Reading from the N-terminus, the 38-residue chain is Large ribosomal subunit protein bL36 (38 aa).

Belongs to the bacterial ribosomal protein bL36 family.

This Phytoplasma australiense protein is Large ribosomal subunit protein bL36.